The chain runs to 101 residues: MAKVALIQRELKREKLVAKYAKKYVQLKAIAGDAKRSDAEREAARLGLQKLPRNANPTRQRNRCAITGRPRGTFRQFGLARAKIREMAFAGDIPGITKASW.

A disordered region spans residues 32-62 (GDAKRSDAEREAARLGLQKLPRNANPTRQRN). Over residues 33-44 (DAKRSDAEREAA) the composition is skewed to basic and acidic residues.

This sequence belongs to the universal ribosomal protein uS14 family. In terms of assembly, part of the 30S ribosomal subunit. Contacts proteins S3 and S10.

Binds 16S rRNA, required for the assembly of 30S particles and may also be responsible for determining the conformation of the 16S rRNA at the A site. The sequence is that of Small ribosomal subunit protein uS14 from Verminephrobacter eiseniae (strain EF01-2).